The sequence spans 115 residues: MSMDNLIRIIEKDQVKEVPEFRPGDTVRVYVKFKEGNKERTQAFEGIVISLRGSGVGKTFTVRRIGANGIGVERIFPLYAPIIEKIEVVRRGKVRRAKLYYLRNIRGKVKIKERR.

Belongs to the bacterial ribosomal protein bL19 family.

Its function is as follows. This protein is located at the 30S-50S ribosomal subunit interface and may play a role in the structure and function of the aminoacyl-tRNA binding site. This chain is Large ribosomal subunit protein bL19, found in Thermosipho melanesiensis (strain DSM 12029 / CIP 104789 / BI429).